The following is a 513-amino-acid chain: ATP synthase subunit alpha (513 aa).

169 to 176 serves as a coordination point for ATP; that stretch reads GDRQCGKT.

It belongs to the ATPase alpha/beta chains family. F-type ATPases have 2 components, CF(1) - the catalytic core - and CF(0) - the membrane proton channel. CF(1) has five subunits: alpha(3), beta(3), gamma(1), delta(1), epsilon(1). CF(0) has three main subunits: a(1), b(2) and c(9-12). The alpha and beta chains form an alternating ring which encloses part of the gamma chain. CF(1) is attached to CF(0) by a central stalk formed by the gamma and epsilon chains, while a peripheral stalk is formed by the delta and b chains.

It localises to the cell inner membrane. It catalyses the reaction ATP + H2O + 4 H(+)(in) = ADP + phosphate + 5 H(+)(out). In terms of biological role, produces ATP from ADP in the presence of a proton gradient across the membrane. The alpha chain is a regulatory subunit. The chain is ATP synthase subunit alpha from Burkholderia mallei (strain NCTC 10229).